The sequence spans 121 residues: Large ribosomal subunit protein uL18 (121 aa).

It belongs to the universal ribosomal protein uL18 family. In terms of assembly, part of the 50S ribosomal subunit; part of the 5S rRNA/L5/L18/L25 subcomplex. Contacts the 5S and 23S rRNAs.

In terms of biological role, this is one of the proteins that bind and probably mediate the attachment of the 5S RNA into the large ribosomal subunit, where it forms part of the central protuberance. The sequence is that of Large ribosomal subunit protein uL18 from Thermoanaerobacter pseudethanolicus (strain ATCC 33223 / 39E) (Clostridium thermohydrosulfuricum).